Here is a 399-residue protein sequence, read N- to C-terminus: Dual-specificity RNA methyltransferase RlmN (399 aa).

The Proton acceptor role is filled by E122. The region spanning 128–371 is the Radical SAM core domain; that stretch reads ETDRGTLCVS…VRTPRGRDIL (244 aa). An intrachain disulfide couples C135 to C374. C142, C146, and C149 together coordinate [4Fe-4S] cluster. S-adenosyl-L-methionine is bound by residues 200 to 201, S232, 254 to 256, and N331; these read GE and SLH. C374 (S-methylcysteine intermediate) is an active-site residue.

The protein belongs to the radical SAM superfamily. RlmN family. [4Fe-4S] cluster serves as cofactor.

It is found in the cytoplasm. The enzyme catalyses adenosine(2503) in 23S rRNA + 2 reduced [2Fe-2S]-[ferredoxin] + 2 S-adenosyl-L-methionine = 2-methyladenosine(2503) in 23S rRNA + 5'-deoxyadenosine + L-methionine + 2 oxidized [2Fe-2S]-[ferredoxin] + S-adenosyl-L-homocysteine. It catalyses the reaction adenosine(37) in tRNA + 2 reduced [2Fe-2S]-[ferredoxin] + 2 S-adenosyl-L-methionine = 2-methyladenosine(37) in tRNA + 5'-deoxyadenosine + L-methionine + 2 oxidized [2Fe-2S]-[ferredoxin] + S-adenosyl-L-homocysteine. Its function is as follows. Specifically methylates position 2 of adenine 2503 in 23S rRNA and position 2 of adenine 37 in tRNAs. m2A2503 modification seems to play a crucial role in the proofreading step occurring at the peptidyl transferase center and thus would serve to optimize ribosomal fidelity. The polypeptide is Dual-specificity RNA methyltransferase RlmN (Rhodopseudomonas palustris (strain ATCC BAA-98 / CGA009)).